A 236-amino-acid polypeptide reads, in one-letter code: Small ribosomal subunit protein uS2c (236 aa).

It belongs to the universal ribosomal protein uS2 family.

It localises to the plastid. The protein localises to the chloroplast. In Nymphaea alba (White water-lily), this protein is Small ribosomal subunit protein uS2c (rps2).